The chain runs to 388 residues: Putative C-&gt;U-editing enzyme APOBEC-4 (388 aa).

Positions 60–176 constitute a CMP/dCMP-type deaminase domain; it reads PQTKHLTFYE…AWNREALRGL (117 aa). Position 92 (histidine 92) interacts with Zn(2+). Residue glutamate 94 is the Proton donor of the active site. Residues cysteine 126 and cysteine 133 each contribute to the Zn(2+) site. The segment at 322-356 is disordered; the sequence is KVKALRKSPSGRPVKKEEARKGSTRSQEANETNKS.

Belongs to the cytidine and deoxycytidylate deaminase family. Zn(2+) serves as cofactor.

Its function is as follows. Putative C to U editing enzyme whose physiological substrate is not yet known. The polypeptide is Putative C-&gt;U-editing enzyme APOBEC-4 (Apobec4) (Rattus norvegicus (Rat)).